The primary structure comprises 577 residues: Arginine--tRNA ligase (577 aa).

Residues Pro123–His133 carry the 'HIGH' region motif.

Belongs to the class-I aminoacyl-tRNA synthetase family. In terms of assembly, monomer.

It is found in the cytoplasm. The enzyme catalyses tRNA(Arg) + L-arginine + ATP = L-arginyl-tRNA(Arg) + AMP + diphosphate. The chain is Arginine--tRNA ligase from Cronobacter sakazakii (strain ATCC BAA-894) (Enterobacter sakazakii).